The following is a 439-amino-acid chain: Kelch domain-containing protein 10 (439 aa).

Residues 1–50 are disordered; that stretch reads MSAAQGWDRNRRRGGGAAGGASGVSGAGAAGGGRGTGQLNRFVQLSGRPH. The residue at position 13 (arginine 13) is an Omega-N-methylarginine. Over residues 15 to 36 the composition is skewed to gly residues; it reads GGAAGGASGVSGAGAAGGGRGT. 6 Kelch repeats span residues 87–154, 155–198, 199–260, 261–319, 320–364, and 365–403; these read PARS…LASM, SLVL…SCRG, KRPS…RYRH, EIAH…HSCV, QIKN…VYFH, and CAAVTPAGCMYIHGGVVNIHENKRTGSLFKIWLVVPSLL. The segment at 398 to 439 is interaction with CUL2; the sequence is VVPSLLELAWEKLLAAFPNLANLSRTQLLHLGLTQELIERLK.

Belongs to the KLHDC10 family. Component of a CRL2 E3 ubiquitin-protein ligase complex, also named ECS (Elongin BC-CUL2/5-SOCS-box protein) complex, composed of CUL2, Elongin BC (ELOB and ELOC), RBX1 and substrate-specific adapter KLHDC10. Interacts (via the 6 Kelch repeats) with PPP5C.

It localises to the nucleus. The protein localises to the cytoplasm. It functions in the pathway protein modification; protein ubiquitination. Its function is as follows. Substrate-recognition component of a Cul2-RING (CRL2) E3 ubiquitin-protein ligase complex of the DesCEND (destruction via C-end degrons) pathway, which recognizes a C-degron located at the extreme C-terminus of target proteins, leading to their ubiquitination and degradation. The C-degron recognized by the DesCEND pathway is usually a motif of less than ten residues and can be present in full-length proteins, truncated proteins or proteolytically cleaved forms. The CRL2(KLHDC10) complex specifically recognizes proteins with a proline-glycine (Pro-Gly) or an alanine tail (CAT tail) at the C-terminus, leading to their ubiquitination and degradation. The CRL2(KLHDC10) complex is involved in the ribosome-associated quality control (RQC) pathway, which mediates the extraction of incompletely synthesized nascent chains from stalled ribosomes: CRL2(KLHDC10) acts downstream of NEMF and recognizes CAT tails associated with stalled nascent chains, leading to their ubiquitination and degradation. Participates in the oxidative stress-induced cell death through MAP3K5 activation. Inhibits PPP5C phosphatase activity on MAP3K5. Acts as a regulator of necroptosis. The sequence is that of Kelch domain-containing protein 10 from Mus musculus (Mouse).